The chain runs to 256 residues: UPF0246 protein Maqu_2499 (256 aa).

This sequence belongs to the UPF0246 family.

In Marinobacter nauticus (strain ATCC 700491 / DSM 11845 / VT8) (Marinobacter aquaeolei), this protein is UPF0246 protein Maqu_2499.